Here is a 129-residue protein sequence, read N- to C-terminus: Small ribosomal subunit protein uS9 (129 aa).

It belongs to the universal ribosomal protein uS9 family.

The protein is Small ribosomal subunit protein uS9 (rpsI) of Treponema pallidum (strain Nichols).